We begin with the raw amino-acid sequence, 1194 residues long: Chitin synthase C (1194 aa).

Disordered regions lie at residues 1–91 (MSLP…PNYL) and 136–177 (GAHG…RRKA). Positions 12–23 (PRREETSAFREP) are enriched in basic and acidic residues. A compositionally biased stretch (basic residues) spans 42–54 (PRHHRHHRSHSSR). 2 stretches are compositionally biased toward basic and acidic residues: residues 55–69 (HQHD…EGGI) and 76–85 (VKPERGRMDP). Residues 150–164 (TRHRSKKRKGSRKIS) show a composition bias toward basic residues. Residues 221 to 241 (IGLISIILMIAAFVGFLTFGF) traverse the membrane as a helical segment. N-linked (GlcNAc...) asparagine glycosylation is found at Asn-351 and Asn-390. The helical transmembrane segment at 476–496 (YVSLIFILSIVIVKFAFALLF) threads the bilayer. Residues Asn-582, Asn-608, Asn-885, and Asn-1014 are each glycosylated (N-linked (GlcNAc...) asparagine). 3 consecutive transmembrane segments (helical) span residues 1039 to 1059 (FVIF…SFTI), 1073 to 1093 (IIPL…VVVT), and 1097 to 1117 (LVYV…NFVL).

Belongs to the chitin synthase family. Class V subfamily.

It localises to the cell membrane. The enzyme catalyses [(1-&gt;4)-N-acetyl-beta-D-glucosaminyl](n) + UDP-N-acetyl-alpha-D-glucosamine = [(1-&gt;4)-N-acetyl-beta-D-glucosaminyl](n+1) + UDP + H(+). Functionally, polymerizes chitin, a structural polymer of the cell wall and septum, by transferring the sugar moiety of UDP-GlcNAc to the non-reducing end of the growing chitin polymer. Responsible for synthesis of 30-40% of the chitin in the cells. ChsA and chsD play redundant functions in conidia formation. The chitin synthesized by the chsD-encoded isozyme contributes to the rigidity of the walls of germinating conidia, of the subapical region of hyphae, and of conidiophore vesicles, but is not necessary for normal morphology of these cells. The sequence is that of Chitin synthase C from Emericella nidulans (strain FGSC A4 / ATCC 38163 / CBS 112.46 / NRRL 194 / M139) (Aspergillus nidulans).